Here is a 501-residue protein sequence, read N- to C-terminus: 5-beta-cholestane-3-alpha,7-alpha-diol 12-alpha-hydroxylase (501 aa).

Residues 1–21 form a helical membrane-spanning segment; the sequence is MVLWGPVLGVLLVAIVGYLCL. The residue at position 326 (Ser-326) is a Phosphoserine. A heme-binding site is contributed by Cys-440.

The protein belongs to the cytochrome P450 family. It depends on heme as a cofactor.

The protein resides in the endoplasmic reticulum membrane. It is found in the microsome membrane. The enzyme catalyses 7alpha-hydroxycholest-4-en-3-one + reduced [NADPH--hemoprotein reductase] + O2 = 7alpha,12alpha-dihydroxycholest-4-en-3-one + oxidized [NADPH--hemoprotein reductase] + H2O + H(+). It catalyses the reaction 5beta-cholestane-3alpha,7alpha-diol + reduced [NADPH--hemoprotein reductase] + O2 = 5beta-cholestane-3alpha,7alpha,12alpha-triol + oxidized [NADPH--hemoprotein reductase] + H2O + H(+). The catalysed reaction is chenodeoxycholate + reduced [NADPH--hemoprotein reductase] + O2 = cholate + oxidized [NADPH--hemoprotein reductase] + H2O + H(+). It participates in lipid metabolism; bile acid biosynthesis. Functionally, a cytochrome P450 monooxygenase involved in primary bile acid biosynthesis. Catalyzes the 12alpha-hydroxylation of 7alpha-hydroxy-4-cholesten-3-one, an intermediate metabolite in cholic acid biosynthesis. Controls biliary balance of cholic acid and chenodeoxycholic acid, ultimately regulating the intestinal absorption of dietary lipids. Mechanistically, uses molecular oxygen inserting one oxygen atom into a substrate, and reducing the second into a water molecule, with two electrons provided by NADPH via cytochrome P450 reductase (CPR; NADPH--hemoprotein reductase). This is 5-beta-cholestane-3-alpha,7-alpha-diol 12-alpha-hydroxylase (CYP8B1) from Sus scrofa (Pig).